Here is a 290-residue protein sequence, read N- to C-terminus: Putative phosphoenolpyruvate synthase regulatory protein (290 aa).

Residue Gly170–Thr177 coordinates ADP.

This sequence belongs to the pyruvate, phosphate/water dikinase regulatory protein family. PSRP subfamily.

It carries out the reaction [pyruvate, water dikinase] + ADP = [pyruvate, water dikinase]-phosphate + AMP + H(+). The enzyme catalyses [pyruvate, water dikinase]-phosphate + phosphate + H(+) = [pyruvate, water dikinase] + diphosphate. Its function is as follows. Bifunctional serine/threonine kinase and phosphorylase involved in the regulation of the phosphoenolpyruvate synthase (PEPS) by catalyzing its phosphorylation/dephosphorylation. The sequence is that of Putative phosphoenolpyruvate synthase regulatory protein (ydiA) from Enterobacter agglomerans (Erwinia herbicola).